A 204-amino-acid chain; its full sequence is Protein-L-isoaspartate O-methyltransferase (204 aa).

Belongs to the methyltransferase superfamily. L-isoaspartyl/D-aspartyl protein methyltransferase family. Monomer.

It is found in the cytoplasm. The catalysed reaction is [protein]-L-isoaspartate + S-adenosyl-L-methionine = [protein]-L-isoaspartate alpha-methyl ester + S-adenosyl-L-homocysteine. Catalyzes the methyl esterification of L-isoaspartyl residues in peptides and proteins that result from spontaneous decomposition of normal L-aspartyl and L-asparaginyl residues. It plays a role in the repair and/or degradation of damaged proteins. The sequence is that of Protein-L-isoaspartate O-methyltransferase (pcm) from Rhizobium meliloti (strain 1021) (Ensifer meliloti).